The sequence spans 241 residues: ATP synthase subunit a (241 aa).

7 helical membrane-spanning segments follow: residues 29–49 (NSSL…LLGV), 86–106 (IPLV…GMLP), 114–134 (HVIV…IVGF), 144–164 (ILLP…IKLF), 177–197 (LAAN…FIMN), 200–220 (LILT…EVFV), and 221–241 (AILQ…DAVK).

This sequence belongs to the ATPase A chain family. As to quaternary structure, F-type ATPases have 2 components, CF(1) - the catalytic core - and CF(0) - the membrane proton channel. CF(1) has five subunits: alpha(3), beta(3), gamma(1), delta(1), epsilon(1). CF(0) has three main subunits: a(1), b(2) and c(9-12). The alpha and beta chains form an alternating ring which encloses part of the gamma chain. CF(1) is attached to CF(0) by a central stalk formed by the gamma and epsilon chains, while a peripheral stalk is formed by the delta and b chains.

The protein localises to the cell membrane. Functionally, key component of the proton channel; it plays a direct role in the translocation of protons across the membrane. The protein is ATP synthase subunit a of Wolbachia sp. subsp. Brugia malayi (strain TRS).